The chain runs to 507 residues: Tabersonine/lochnericine 19-hydroxylase (507 aa).

A helical membrane pass occupies residues 8 to 28; that stretch reads FFVLLLPFFIGIAFIYKLWNF. Asn167 carries N-linked (GlcNAc...) asparagine glycosylation. Heme is bound at residue Cys447.

Belongs to the cytochrome P450 family. Heme serves as cofactor. Confined to roots.

Its subcellular location is the endoplasmic reticulum membrane. The catalysed reaction is (-)-tabersonine + reduced [NADPH--hemoprotein reductase] + O2 = (-)-(R)-19-hydroxytabersonine + oxidized [NADPH--hemoprotein reductase] + H2O + H(+). It catalyses the reaction lochnericine + reduced [NADPH--hemoprotein reductase] + O2 = horhammericine + oxidized [NADPH--hemoprotein reductase] + H2O + H(+). It carries out the reaction (-)-vincadifformine + reduced [NADPH--hemoprotein reductase] + O2 = (-)-minovincinine + oxidized [NADPH--hemoprotein reductase] + H2O + H(+). The protein operates within alkaloid biosynthesis. Functionally, component of the monoterpenoid indole alkaloids (MIAs, e.g. echitovenine, tabersonine, lochnericine, 19-hydroxytabersonine and horhammericine) biosynthetic pathway; MIAs are used in cancer treatment and other medical applications. Cytochrome P450 catalyzing the conversion of (-)-tabersonine to 19-hydroxytabersonine, of lochnericine to horhammericine and of (-)-vincadifformine to (-)-minovincinine. The protein is Tabersonine/lochnericine 19-hydroxylase of Catharanthus roseus (Madagascar periwinkle).